Consider the following 340-residue polypeptide: Fructose-1,6-bisphosphatase class 1 (340 aa).

Mg(2+) contacts are provided by glutamate 107, aspartate 126, leucine 128, and aspartate 129. Residue asparagine 215 participates in substrate binding. Residue glutamate 287 coordinates Mg(2+).

Belongs to the FBPase class 1 family. As to quaternary structure, homotetramer. Requires Mg(2+) as cofactor.

The protein resides in the cytoplasm. It catalyses the reaction beta-D-fructose 1,6-bisphosphate + H2O = beta-D-fructose 6-phosphate + phosphate. It functions in the pathway carbohydrate biosynthesis; gluconeogenesis. This Brucella ovis (strain ATCC 25840 / 63/290 / NCTC 10512) protein is Fructose-1,6-bisphosphatase class 1.